The sequence spans 338 residues: Ketol-acid reductoisomerase (NADP(+)) (338 aa).

The region spanning 1–181 (MNIYYDKDCD…GGGRAGIIET (181 aa)) is the KARI N-terminal Rossmann domain. NADP(+) is bound by residues 24 to 27 (YGSQ), R47, S50, S52, and 82 to 85 (DEHQ). The active site involves H107. G133 contributes to the NADP(+) binding site. Residues 182–327 (AFREETETDL…ERLRSMMPWI (146 aa)) form the KARI C-terminal knotted domain. Residues D190, E194, E226, and E230 each coordinate Mg(2+). S251 serves as a coordination point for substrate.

Belongs to the ketol-acid reductoisomerase family. Mg(2+) serves as cofactor.

It carries out the reaction (2R)-2,3-dihydroxy-3-methylbutanoate + NADP(+) = (2S)-2-acetolactate + NADPH + H(+). The enzyme catalyses (2R,3R)-2,3-dihydroxy-3-methylpentanoate + NADP(+) = (S)-2-ethyl-2-hydroxy-3-oxobutanoate + NADPH + H(+). It participates in amino-acid biosynthesis; L-isoleucine biosynthesis; L-isoleucine from 2-oxobutanoate: step 2/4. Its pathway is amino-acid biosynthesis; L-valine biosynthesis; L-valine from pyruvate: step 2/4. Involved in the biosynthesis of branched-chain amino acids (BCAA). Catalyzes an alkyl-migration followed by a ketol-acid reduction of (S)-2-acetolactate (S2AL) to yield (R)-2,3-dihydroxy-isovalerate. In the isomerase reaction, S2AL is rearranged via a Mg-dependent methyl migration to produce 3-hydroxy-3-methyl-2-ketobutyrate (HMKB). In the reductase reaction, this 2-ketoacid undergoes a metal-dependent reduction by NADPH to yield (R)-2,3-dihydroxy-isovalerate. The protein is Ketol-acid reductoisomerase (NADP(+)) of Nitrosococcus oceani (strain ATCC 19707 / BCRC 17464 / JCM 30415 / NCIMB 11848 / C-107).